A 228-amino-acid chain; its full sequence is UPF0758 protein Reut_A2732 (228 aa).

Residues 102–224 (GLDSPAAVRS…VHSFAEHGEL (123 aa)) form the MPN domain. 3 residues coordinate Zn(2+): histidine 173, histidine 175, and aspartate 186. The JAMM motif signature appears at 173-186 (HNHPSGCCTPSQSD).

The protein belongs to the UPF0758 family.

This is UPF0758 protein Reut_A2732 from Cupriavidus pinatubonensis (strain JMP 134 / LMG 1197) (Cupriavidus necator (strain JMP 134)).